Consider the following 265-residue polypeptide: Glutamate racemase (265 aa).

Substrate-binding positions include 12–13 (DS) and 44–45 (YG). Catalysis depends on C75, which acts as the Proton donor/acceptor. Position 76 to 77 (76 to 77 (NT)) interacts with substrate. The active-site Proton donor/acceptor is C186. Position 187 to 188 (187 to 188 (TH)) interacts with substrate.

The protein belongs to the aspartate/glutamate racemases family.

The enzyme catalyses L-glutamate = D-glutamate. The protein operates within cell wall biogenesis; peptidoglycan biosynthesis. Functionally, provides the (R)-glutamate required for cell wall biosynthesis. The polypeptide is Glutamate racemase (Pseudomonas aeruginosa (strain ATCC 15692 / DSM 22644 / CIP 104116 / JCM 14847 / LMG 12228 / 1C / PRS 101 / PAO1)).